A 176-amino-acid polypeptide reads, in one-letter code: Peroxiredoxin AHP1 (176 aa).

An N-acetylserine modification is found at serine 2. In terms of domain architecture, Thioredoxin spans 9-176; sequence FPAGDYKFQY…SSVESVLAHL (168 aa). Serine 28 is subject to Phosphoserine. Lysine 32 is covalently cross-linked (Glycyl lysine isopeptide (Lys-Gly) (interchain with G-Cter in URM1)). Lysine 48 participates in a covalent cross-link: Glycyl lysine isopeptide (Lys-Gly) (interchain with G-Cter in ubiquitin); alternate. Residue lysine 48 forms a Glycyl lysine isopeptide (Lys-Gly) (interchain with G-Cter in URM1); alternate linkage. Residue serine 59 is modified to Phosphoserine. Cysteine 62 functions as the Cysteine sulfenic acid (-SOH) intermediate in the catalytic mechanism. Cysteine 62 bears the Cysteine persulfide mark. Lysine 79 participates in a covalent cross-link: Glycyl lysine isopeptide (Lys-Gly) (interchain with G-Cter in URM1). Lysine 81 participates in a covalent cross-link: Glycyl lysine isopeptide (Lys-Gly) (interchain with G-Cter in ubiquitin); alternate. Lysine 81 participates in a covalent cross-link: Glycyl lysine isopeptide (Lys-Gly) (interchain with G-Cter in URM1); alternate. Lysine 107 is covalently cross-linked (Glycyl lysine isopeptide (Lys-Gly) (interchain with G-Cter in URM1)). Residue lysine 113 forms a Glycyl lysine isopeptide (Lys-Gly) (interchain with G-Cter in ubiquitin) linkage. Serine 116 carries the phosphoserine modification. Cysteine persulfide is present on cysteine 120. Residue lysine 124 forms a Glycyl lysine isopeptide (Lys-Gly) (interchain with G-Cter in URM1) linkage. Lysine 156 is covalently cross-linked (Glycyl lysine isopeptide (Lys-Gly) (interchain with G-Cter in URM1); alternate). Lysine 156 is covalently cross-linked (Glycyl lysine isopeptide (Lys-Gly) (interchain with G-Cter in SUMO); alternate).

The protein belongs to the peroxiredoxin family. Prx5 subfamily. Homodimer; disulfide-linked, upon oxidation. Post-translationally, conjugated to URM1, a ubiquitin-like protein, in response to oxidative stresses. The attachment of URM1 to lysine residues exclusively depends on the presence of a peroxidatic cysteine in the target protein, with low specificity for the particular residue, motif, or structural context at which urmylation can occur. The URM1-conjugation reaction is mechanistically and directly coupled to the process of cysteine persulfidation, transfering the sulfur atom of the URM1 thiocarboxyl group to redox-active cysteine residues in the target protein if it is exposed to oxidative conditions. Persulfidated on specific redox-active cysteine residues. Persulfidation (also called protein S-sulfhydration) may provide a molecular mechanism that enables cells to protect vulnerable cysteine residues from reactive oxygen species (ROS) under stress conditions.

The protein resides in the cytoplasm. It catalyses the reaction a hydroperoxide + [thioredoxin]-dithiol = an alcohol + [thioredoxin]-disulfide + H2O. Functionally, thiol-specific peroxidase that catalyzes the reduction of hydrogen peroxide and organic hydroperoxides to water and alcohols, respectively. Plays a role in cell protection against oxidative stress by detoxifying peroxides and as sensor of hydrogen peroxide-mediated signaling events. Preferentially eliminates organic peroxides rather than hydrogen peroxide. Relays alkyl hydroperoxides as a signal to the transcription factor CAD1/YAP2 by inducing the formation of intramolecular disulfide bonds in CAD1, which causes its nuclear accumulation and activation. Involved in cellular Mn(2+) homeostasis. This Saccharomyces cerevisiae (strain ATCC 204508 / S288c) (Baker's yeast) protein is Peroxiredoxin AHP1.